We begin with the raw amino-acid sequence, 156 residues long: Small ribosomal subunit protein uS7 (156 aa).

This sequence belongs to the universal ribosomal protein uS7 family. Part of the 30S ribosomal subunit. Contacts proteins S9 and S11.

In terms of biological role, one of the primary rRNA binding proteins, it binds directly to 16S rRNA where it nucleates assembly of the head domain of the 30S subunit. Is located at the subunit interface close to the decoding center, probably blocks exit of the E-site tRNA. This chain is Small ribosomal subunit protein uS7, found in Lachnospira eligens (strain ATCC 27750 / DSM 3376 / VPI C15-48 / C15-B4) (Eubacterium eligens).